A 1114-amino-acid chain; its full sequence is Lysylphosphatidylglycerol biosynthesis bifunctional protein LysX (1114 aa).

Basic and acidic residues predominate over residues Met1 to Ser11. Residues Met1 to Gly26 are disordered. Positions Met1 to Gly618 are phosphatidylglycerol lysyltransferase. The next 6 membrane-spanning stretches (helical) occupy residues Ile38–Val58, Ala77–Ser97, Ile101–Ser121, Asn126–Ala146, Gly164–Phe184, and Phe219–Leu239. The interval Glu619–Gln1114 is lysine--tRNA ligase. A DNA-binding region (OB) is located at residues Val674–Met751. Mg(2+)-binding residues include Asp1025 and Glu1032.

In the N-terminal section; belongs to the LPG synthetase family. This sequence in the C-terminal section; belongs to the class-II aminoacyl-tRNA synthetase family. Requires Mg(2+) as cofactor.

The protein localises to the cell membrane. It catalyses the reaction tRNA(Lys) + L-lysine + ATP = L-lysyl-tRNA(Lys) + AMP + diphosphate. It carries out the reaction L-lysyl-tRNA(Lys) + a 1,2-diacyl-sn-glycero-3-phospho-(1'-sn-glycerol) = a 1,2-diacyl-sn-glycero-3-phospho-1'-(3'-O-L-lysyl)-sn-glycerol + tRNA(Lys). Catalyzes the production of L-lysyl-tRNA(Lys)transfer and the transfer of a lysyl group from L-lysyl-tRNA(Lys) to membrane-bound phosphatidylglycerol (PG), which produces lysylphosphatidylglycerol (LPG), one of the components of the bacterial membrane with a positive net charge. LPG synthesis contributes to the resistance to cationic antimicrobial peptides (CAMPs) and likely protects M.tuberculosis against the CAMPs produced by competiting microorganisms (bacteriocins). In fact, the modification of anionic phosphatidylglycerol with positively charged L-lysine results in repulsion of the peptides. This Rhodococcus jostii (strain RHA1) protein is Lysylphosphatidylglycerol biosynthesis bifunctional protein LysX (lysX).